The chain runs to 877 residues: MNAQVTPMMAQYLEIKAAHPDALLFYRMGDFYEMFFDDAVAAAEALDIALTKRGKHNGEDIAMCGVPAHSAESYLLTLIRKGFRVGICEQMEDPATAKKRGGSKAVVRREVVRLVTPGTLTEDTLLEARRHNYLASYADVRGEGALAWCDISTGDFRVMRCPAVRLGPELARLSPKEVLVSDGLDIARQDAIIELGAAVTPLSPGSFDSASAEQRLAGLFSVSTLEGFGNFARAEVSAMGALIDYLELTQKGALPLLRAPRQQSADRLLQLDTATRRNLELTQALSGGRANSLLSVLDRTQTAGGARLLQRRLTGPSTDLDVIRARHESVSFFFSDTLIRDDLEAELRRIPDLDRALSRLALDRGGPRDLSAIRDGLSGAARLSDKLKIVDLPPLLEGAVQDLQGHDELSALLDEALVAEPPVQLRDGGLIAPGYHAELDEARTLRDEGRSVIATMQADYVEATGVNALKIKHNNVLGYFIETTATHAEKMLNPPLSERFIHRQTTANQVRFTTVELSELETKILNAGNRALEIERVLFQSLRDAILNCQDQIGQAARGLAELDLSAALARRAREGDWTQPEMTEDRAFMIEGARHPVVEAALAKDGTSFVANDCDLSAEGGAAITLLTGPNMAGKSTYLRQNALLVIMAQTGSFVPAKCAKIGLVSQVFSRVGASDDLARGRSTFMVEMVETATILNQADDRALVILDEIGRGTATYDGLSIAWATLEHLHETNQCRALFATHYHEMTSLASKLDGLTNATVAVKEWEGEVIFLHEVREGAADRSYGVQVAKLAGLPDAVIARAQVVLDALEKGEREGGERKAVIDDLPLFAMMPAPAPAPSAPSLVEEKLRAVHPDEMTAREALNLLYELKAELS.

630 to 637 contacts ATP; it reads GPNMAGKS.

It belongs to the DNA mismatch repair MutS family.

Its function is as follows. This protein is involved in the repair of mismatches in DNA. It is possible that it carries out the mismatch recognition step. This protein has a weak ATPase activity. This is DNA mismatch repair protein MutS from Jannaschia sp. (strain CCS1).